The chain runs to 820 residues: Phosphoenolpyruvate synthase (820 aa).

His-438 functions as the Tele-phosphohistidine intermediate in the catalytic mechanism. The substrate site is built by Arg-539, Arg-587, Glu-689, Gly-710, Ser-711, Asn-712, and Asp-713. Glu-689 lines the Mg(2+) pocket. Asp-713 lines the Mg(2+) pocket. Catalysis depends on Cys-762, which acts as the Proton donor.

The protein belongs to the PEP-utilizing enzyme family. Mg(2+) serves as cofactor.

The catalysed reaction is pyruvate + ATP + H2O = phosphoenolpyruvate + AMP + phosphate + 2 H(+). It participates in carbohydrate biosynthesis; gluconeogenesis. Functionally, catalyzes the phosphorylation of pyruvate to phosphoenolpyruvate. The chain is Phosphoenolpyruvate synthase (ppsA) from Aeropyrum pernix (strain ATCC 700893 / DSM 11879 / JCM 9820 / NBRC 100138 / K1).